A 425-amino-acid chain; its full sequence is Histone-binding protein RBBP4 (425 aa).

N-acetylalanine is present on alanine 2. WD repeat units lie at residues tyrosine 32 to glycine 125, glutamate 126 to glycine 175, histidine 176 to phenylalanine 223, glycine 225 to aspartate 270, alanine 271 to glutamate 314, serine 315 to glycine 371, and glycine 372 to methionine 404.

The protein belongs to the WD repeat RBAP46/RBAP48/MSI1 family. Binds directly to histone H4, probably via helix 1 of the histone fold, a region that is not accessible when histone H4 is in chromatin. Forms a large corepressor complex that contains ncor1, sin3a and possibly sin3b, histone deacetylases hdac2, hdac1, rbbp4 and possibly rbbp7.

It localises to the nucleus. The protein localises to the chromosome. Its subcellular location is the telomere. Core histone-binding subunit that may target chromatin assembly factors, chromatin remodeling factors and histone deacetylases to their histone substrates in a manner that is regulated by nucleosomal DNA. Component of several complexes which regulate chromatin metabolism. The chain is Histone-binding protein RBBP4 (rbbp4) from Xenopus tropicalis (Western clawed frog).